The chain runs to 731 residues: Unconventional prefoldin RPB5 interactor-like protein (731 aa).

2 coiled-coil regions span residues Arg91 to Thr115 and Leu143 to Leu176. Residues Pro205–Leu217 are compositionally biased toward polar residues. Disordered regions lie at residues Pro205–Glu224, Met259–Val302, and Ala370–Glu396. The stretch at Glu220–Leu258 forms a coiled coil. Over residues Ile285 to Glu300 the composition is skewed to acidic residues. Coiled-coil stretches lie at residues Asp357 to Glu379 and Ser452 to Asn477. 2 stretches are compositionally biased toward polar residues: residues Gly508–Ser518 and Ser575–Asp599. Disordered stretches follow at residues Gly508–Asp527, Gly567–Asp682, and Val694–Thr731. Residues Phe611 to Lys621 show a composition bias toward basic and acidic residues. A compositionally biased stretch (polar residues) spans Ser623–Arg644. Basic residues predominate over residues Lys661–Glu673. Residues Arg721–Thr731 are compositionally biased toward basic and acidic residues.

The protein belongs to the RNA polymerase II subunit 5-mediating protein family. In terms of assembly, interacts with serine/threonine-protein phosphatases flw/PP1beta9C and Pp1-87B with higher affinity for Pp1-87B.

The protein resides in the cytoplasm. It is found in the chromosome. Its subcellular location is the nucleus. Its function is as follows. Inhibits the activity of serine/threonine-protein phosphatases flw/PP1beta9C and Pp1-87B. Required for germ line cell viability and differentiation, normal transcriptional activity and maintenance of DNA integrity. In Drosophila melanogaster (Fruit fly), this protein is Unconventional prefoldin RPB5 interactor-like protein.